We begin with the raw amino-acid sequence, 308 residues long: Methionyl-tRNA formyltransferase (308 aa).

Residue 111-114 (SLLP) coordinates (6S)-5,6,7,8-tetrahydrofolate.

The protein belongs to the Fmt family.

The catalysed reaction is L-methionyl-tRNA(fMet) + (6R)-10-formyltetrahydrofolate = N-formyl-L-methionyl-tRNA(fMet) + (6S)-5,6,7,8-tetrahydrofolate + H(+). Functionally, attaches a formyl group to the free amino group of methionyl-tRNA(fMet). The formyl group appears to play a dual role in the initiator identity of N-formylmethionyl-tRNA by promoting its recognition by IF2 and preventing the misappropriation of this tRNA by the elongation apparatus. The protein is Methionyl-tRNA formyltransferase of Thermodesulfovibrio yellowstonii (strain ATCC 51303 / DSM 11347 / YP87).